Consider the following 324-residue polypeptide: Probable UDP-sugar transporter protein SLC35A4 (324 aa).

Residues 1–18 (MSVEDGGMPGLGRPRQAR) are Cytoplasmic-facing. A helical transmembrane segment spans residues 19–39 (WTLMLLLSTAMYGAHAPLLAL). Residues 40–52 (CHVDGRVPFRPSS) are Lumenal-facing. A helical transmembrane segment spans residues 53–73 (AVLLTELTKLLLCAFSLLVGW). At 74–85 (QAWPQGPPPWRQ) the chain is on the cytoplasmic side. The chain crosses the membrane as a helical span at residues 86-106 (AAPFALSALLYGANNNLVIYL). Topologically, residues 107 to 142 (QRYMDPSTYQVLSNLKIGSTAVLYCLCLRHRLSVRQ) are lumenal. Residues 143–163 (GLALLLLMAAGACYAAGGLQV) traverse the membrane as a helical segment. Residues 164–180 (PGNTLPSPPPAAAASPM) lie on the Cytoplasmic side of the membrane. The chain crosses the membrane as a helical span at residues 181–201 (PLHITPLGLLLLILYCLISGL). Residues 202 to 214 (SSVYTELLMKRQR) lie on the Lumenal side of the membrane. Residues 215 to 235 (LPLALQNLFLYTFGVLLNLGL) form a helical membrane-spanning segment. Topologically, residues 236 to 250 (HAGGGSGPGLLEGFS) are cytoplasmic. The helical transmembrane segment at 251–271 (GWAALVVLSQALNGLLMSAVM) threads the bilayer. Residues 272 to 275 (KHGS) lie on the Lumenal side of the membrane. Residues 276–298 (SITRLFVVSCSLVVNAVLSAVLL) form a helical membrane-spanning segment. Topologically, residues 299 to 324 (RLQLTAAFFLATLLIGLAMRLYYGSR) are cytoplasmic.

This sequence belongs to the nucleotide-sugar transporter family. SLC35A subfamily. Found in a complex with SLC35A2 and SLC35A3.

It is found in the golgi apparatus membrane. The catalysed reaction is CDP-L-ribitol(in) + CDP(out) = CDP-L-ribitol(out) + CDP(in). In terms of biological role, mediates the transport of CDP-ribitol. Does not exhibit CMP-sialic acid, UDP-galactose and UDP-N-acetylglucosamine transport activity. This Homo sapiens (Human) protein is Probable UDP-sugar transporter protein SLC35A4.